The following is a 422-amino-acid chain: Leucine-rich repeat protein 1 (422 aa).

LRR repeat units lie at residues 184–207 (LKNLTKLDLSHNCIKKLPATIGDL), 209–230 (HLQELNLNDNQLETFSVPLCTS), 233–258 (QKSLHSLDLSKNKIKALPVQFCQFRE), 260–279 (TNLNLNDNELIHLPFKIGQL), 280–301 (TNLRFLSAARNKLRNLPSEFKM), and 304–327 (LEYLDLFGNTFEKPEVIPIIKLQV).

As to quaternary structure, component of the probable ECS(LRR1) E3 ubiquitin-protein ligase complex which contains CUL2, RBX1, Elongin BC complex and LRR1. Interacts with CUL2, RBX1, ELOB and ELOC.

The protein localises to the nucleus. Its pathway is protein modification; protein ubiquitination. In terms of biological role, substrate recognition subunit of an ECS (Elongin BC-CUL2/5-SOCS-box protein) E3 ubiquitin-protein ligase complex which mediates the ubiquitination and subsequent proteasomal degradation of target proteins. ECS(LRR1) ubiquitinates MCM7 and promotes CMG replisome disassembly by VCP and chromatin extraction during S-phase. May negatively regulate the 4-1BB-mediated signaling cascades which result in the activation of NK-kappaB and JNK1. The chain is Leucine-rich repeat protein 1 from Mus musculus (Mouse).